The sequence spans 277 residues: Putative protease slr0021 (277 aa).

The Nucleophile role is filled by S85. The active-site Proton donor/acceptor is K137.

Belongs to the peptidase S49 family.

This chain is Putative protease slr0021, found in Synechocystis sp. (strain ATCC 27184 / PCC 6803 / Kazusa).